Here is a 182-residue protein sequence, read N- to C-terminus: Large ribosomal subunit protein uL5 (182 aa).

The protein belongs to the universal ribosomal protein uL5 family. As to quaternary structure, part of the 50S ribosomal subunit; part of the 5S rRNA/L5/L18/L25 subcomplex. Contacts the 5S rRNA and the P site tRNA. Forms a bridge to the 30S subunit in the 70S ribosome.

In terms of biological role, this is one of the proteins that bind and probably mediate the attachment of the 5S RNA into the large ribosomal subunit, where it forms part of the central protuberance. In the 70S ribosome it contacts protein S13 of the 30S subunit (bridge B1b), connecting the 2 subunits; this bridge is implicated in subunit movement. Contacts the P site tRNA; the 5S rRNA and some of its associated proteins might help stabilize positioning of ribosome-bound tRNAs. This is Large ribosomal subunit protein uL5 from Nostoc punctiforme (strain ATCC 29133 / PCC 73102).